Here is a 118-residue protein sequence, read N- to C-terminus: Large ribosomal subunit protein bL20 (118 aa).

It belongs to the bacterial ribosomal protein bL20 family.

Its function is as follows. Binds directly to 23S ribosomal RNA and is necessary for the in vitro assembly process of the 50S ribosomal subunit. It is not involved in the protein synthesizing functions of that subunit. The polypeptide is Large ribosomal subunit protein bL20 (Campylobacter curvus (strain 525.92)).